The chain runs to 246 residues: Probable transcriptional regulatory protein CTC_02215 (246 aa).

It belongs to the TACO1 family.

The protein localises to the cytoplasm. This chain is Probable transcriptional regulatory protein CTC_02215, found in Clostridium tetani (strain Massachusetts / E88).